Reading from the N-terminus, the 210-residue chain is High frequency lysogenization protein HflD homolog (210 aa).

A coiled-coil region spans residues 103–130 (EAKAKLAERLQQIERQLPLYENDIMADQ).

The protein belongs to the HflD family.

It is found in the cytoplasm. The protein localises to the cell inner membrane. The sequence is that of High frequency lysogenization protein HflD homolog from Actinobacillus pleuropneumoniae serotype 5b (strain L20).